The following is a 513-amino-acid chain: Putative ribose/galactose/methyl galactoside import ATP-binding protein (513 aa).

ABC transporter domains lie at 24–260 (LSAE…VGRE) and 270–510 (VPIG…VMEL). ATP is bound at residue 56 to 63 (GENGAGKS).

This sequence belongs to the ABC transporter superfamily. Carbohydrate importer 2 (CUT2) (TC 3.A.1.2) family.

Its subcellular location is the cell inner membrane. It catalyses the reaction D-ribose(out) + ATP + H2O = D-ribose(in) + ADP + phosphate + H(+). The catalysed reaction is D-galactose(out) + ATP + H2O = D-galactose(in) + ADP + phosphate + H(+). Part of an ABC transporter complex involved in carbohydrate import. Could be involved in ribose, galactose and/or methyl galactoside import. Responsible for energy coupling to the transport system. The chain is Putative ribose/galactose/methyl galactoside import ATP-binding protein from Rhizobium johnstonii (strain DSM 114642 / LMG 32736 / 3841) (Rhizobium leguminosarum bv. viciae).